The following is a 116-amino-acid chain: MRVKTGVVRRRRHKKVLKLARGFYSGRRKHFRKAKEQLERSMYYAFRDRKQKKREFRSLWVVRINAACRMHNTSYSRFMHALKVANIELDRKVLADMAMNDMQAFTSVLESVKEHL.

Belongs to the bacterial ribosomal protein bL20 family.

Functionally, binds directly to 23S ribosomal RNA and is necessary for the in vitro assembly process of the 50S ribosomal subunit. It is not involved in the protein synthesizing functions of that subunit. This chain is Large ribosomal subunit protein bL20 (rplT), found in Helicobacter pylori (strain ATCC 700392 / 26695) (Campylobacter pylori).